We begin with the raw amino-acid sequence, 526 residues long: GMP synthase [glutamine-hydrolyzing] (526 aa).

A Glutamine amidotransferase type-1 domain is found at 10-208; it reads RILILDFGSQ…VVDLCGCEKL (199 aa). Residue C87 is the Nucleophile of the active site. Active-site residues include H182 and E184. The 193-residue stretch at 209 to 401 folds into the GMPS ATP-PPase domain; the sequence is WTTENIIDDS…LGLPSDMVYR (193 aa). 236–242 contributes to the ATP binding site; that stretch reads SGGVDSS.

In terms of assembly, homodimer.

It carries out the reaction XMP + L-glutamine + ATP + H2O = GMP + L-glutamate + AMP + diphosphate + 2 H(+). It functions in the pathway purine metabolism; GMP biosynthesis; GMP from XMP (L-Gln route): step 1/1. Functionally, catalyzes the synthesis of GMP from XMP. This chain is GMP synthase [glutamine-hydrolyzing], found in Hydrogenovibrio crunogenus (strain DSM 25203 / XCL-2) (Thiomicrospira crunogena).